Reading from the N-terminus, the 2014-residue chain is Leucine-rich repeat serine/threonine-protein kinase 1 (2014 aa).

ANK repeat units lie at residues Gln-51–Ser-81, Glu-86–Thr-116, Thr-119–Thr-148, Leu-152–Asn-182, and Ile-193–Ser-222. LRR repeat units follow at residues Gln-279 to Gly-300, Asn-303 to Asp-324, Arg-330 to Leu-351, Lys-353 to Thr-374, Lys-381 to Ser-402, Ser-405 to Pro-426, Leu-427 to Phe-447, His-451 to Leu-472, Ala-474 to Thr-495, Gln-498 to Lys-519, Ser-549 to Leu-570, Asn-572 to Leu-594, and Asn-596 to Glu-617. In terms of domain architecture, Roc spans Lys-632–Met-826. Positions 647, 648, 650, 651, 652, 653, 670, 758, 760, 806, and 807 each coordinate GDP. A COR domain is found at Gly-840–Lys-1237. Thr-1061 carries the post-translational modification Phosphothreonine. Residues Ser-1064 and Ser-1074 each carry the phosphoserine modification. Thr-1075 is subject to Phosphothreonine. One can recognise a Protein kinase domain in the interval Glu-1242–Phe-1525. ATP is bound by residues Leu-1248–Val-1256 and Lys-1270. Asp-1386 serves as the catalytic Proton acceptor. WD repeat units lie at residues Ala-1539–Cys-1579, Met-1582–Asp-1622, Thr-1623–Tyr-1668, Val-1693–Pro-1729, Tyr-1730–Gly-1778, Asp-1779–Lys-1948, and Arg-1950–Arg-1986. A WD40 loop; involved in dimer stabilization region spans residues Pro-1791–Leu-1906. The segment at Ser-1839–Ser-1895 is disordered. Residues Arg-1853–Ser-1871 are compositionally biased toward low complexity.

The protein belongs to the protein kinase superfamily. TKL Ser/Thr protein kinase family. ROCO subfamily. In terms of assembly, homodimer. The homodimer is autoinhibited and stabilized by its N-terminal residues and ANK repeats. Interacts with CSK. The cofactor is Mg(2+). It depends on Mn(2+) as a cofactor. In terms of processing, autophosphorylated. Autophosphorylation in inhibited in its dimeric state. Phosphorylated by protein kinase C isozymes PRKCA, PRKCB, PRKCG, PRKCE, PRKCZ and PRKCT at Ser-1064, Ser-1074 and Thr-1075. Phosphorylation at these residues activates the kinase activity of LRRK1 to phosphorylate RAB7A. As to expression, expressed in osteoclasts and bone marrow stromal cells.

It localises to the cytoplasm. The protein localises to the cell membrane. It carries out the reaction L-seryl-[protein] + ATP = O-phospho-L-seryl-[protein] + ADP + H(+). The enzyme catalyses L-threonyl-[protein] + ATP = O-phospho-L-threonyl-[protein] + ADP + H(+). With respect to regulation, activated by phosphorylation by PKC. Binds both GTP and GDP; binding of GTP stimulates kinase activity. Sterically autoinhibited in its dimeric state. In terms of biological role, serine/threonine-protein kinase which phosphorylates RAB proteins involved in intracellular trafficking. Phosphorylates RAB7A; this activity is dependent on protein kinase C (PKC) activation. Plays a role in the negative regulation of bone mass, acting through the maturation of osteoclasts. This chain is Leucine-rich repeat serine/threonine-protein kinase 1, found in Mus musculus (Mouse).